The sequence spans 260 residues: G patch domain-containing protein 11 (260 aa).

Residues 25–61 adopt a coiled-coil conformation; sequence MLRQIREARRKEEKRQEANLKNRQKSIKEEEQERRDM. Residues 33-60 form a disordered region; the sequence is RRKEEKRQEANLKNRQKSIKEEEQERRD. The G-patch domain occupies 69–115; it reads CENKGFALLQKMGYKSGQALGKSGDGIVEPIPLNVKTGKSGIGHETL. Lysine 123 carries the N6-acetyllysine modification. Residues 187-212 are disordered; the sequence is WLRPEEETEEETEEEKEQDEDEYKSE. A compositionally biased stretch (acidic residues) spans 192-210; sequence EETEEETEEEKEQDEDEYK.

This sequence belongs to the GPATCH11 family.

The protein localises to the chromosome. The protein resides in the centromere. Its subcellular location is the kinetochore. The chain is G patch domain-containing protein 11 (GPATCH11) from Bos taurus (Bovine).